Reading from the N-terminus, the 779-residue chain is Membrane metallo-endopeptidase-like 1 (779 aa).

At 1 to 27 the chain is on the cytoplasmic side; it reads MGKSEGPVGMVESAGRAGQKRPGFLEG. The chain crosses the membrane as a helical; Signal-anchor for type II membrane protein span at residues 28–48; sequence GLLLLLLLVTAALVALGVLYA. The Lumenal segment spans residues 49–779; the sequence is DRRGKQLPRL…MHPKERCRVW (731 aa). One can recognise a Peptidase M13 domain in the interval 88–779; it reads VCTTPGCVIA…MHPKERCRVW (692 aa). 5 disulfides stabilise this stretch: cysteine 89–cysteine 94, cysteine 112–cysteine 764, cysteine 120–cysteine 724, cysteine 175–cysteine 439, and cysteine 650–cysteine 776. Position 135 (arginine 135) interacts with a peptide. 4 N-linked (GlcNAc...) asparagine glycosylation sites follow: asparagine 177, asparagine 207, asparagine 350, and asparagine 530. Positions 515 to 560 form a coiled coil; it reads LEEMNRRLDEEYSNLNFSEDLYFENSLQNLKVGAQRSLRKLREKVD. Histidine 613 serves as a coordination point for Zn(2+). Glutamate 614 is an active-site residue. Histidine 617 contributes to the Zn(2+) binding site. Asparagine 657 is a glycosylation site (N-linked (GlcNAc...) asparagine). Glutamate 676 serves as a coordination point for Zn(2+). Residue aspartate 680 is the Proton donor of the active site.

It belongs to the peptidase M13 family. It depends on Zn(2+) as a cofactor. Post-translationally, N-glycosylated. Predominantly expressed in testis. Weakly expressed in brain, kidney and heart.

It is found in the membrane. The protein resides in the secreted. It carries out the reaction Preferential cleavage of polypeptides between hydrophobic residues, particularly with Phe or Tyr at P1'.. Its activity is regulated as follows. Inhibited by thiorphan and phosphoramidon. Its function is as follows. Metalloprotease involved in sperm function, possibly by modulating the processes of fertilization and early embryonic development. Degrades a broad variety of small peptides with a preference for peptides shorter than 3 kDa containing neutral bulky aliphatic or aromatic amino acid residues. Shares the same substrate specificity with MME and cleaves peptides at the same amide bond. The chain is Membrane metallo-endopeptidase-like 1 (MMEL1) from Homo sapiens (Human).